Here is a 289-residue protein sequence, read N- to C-terminus: tRNA pseudouridine synthase B (289 aa).

The active-site Nucleophile is the Asp38.

This sequence belongs to the pseudouridine synthase TruB family. Type 1 subfamily.

The enzyme catalyses uridine(55) in tRNA = pseudouridine(55) in tRNA. Its function is as follows. Responsible for synthesis of pseudouridine from uracil-55 in the psi GC loop of transfer RNAs. This is tRNA pseudouridine synthase B from Clostridium tetani (strain Massachusetts / E88).